The primary structure comprises 252 residues: Flagellar brake protein YcgR (252 aa).

Residues 118-236 (QRREYFRVSI…EKGLQRAIFE (119 aa)) enclose the PilZ domain.

Belongs to the YcgR family. Monomer. Interacts with the flagellar basal bodies.

The protein resides in the bacterial flagellum basal body. In terms of biological role, acts as a flagellar brake, regulating swimming and swarming in a bis-(3'-5') cyclic diguanylic acid (c-di-GMP)-dependent manner. Binds 1 c-di-GMP dimer per subunit. Increasing levels of c-di-GMP lead to decreased motility. This is Flagellar brake protein YcgR from Yersinia pseudotuberculosis serotype I (strain IP32953).